A 280-amino-acid chain; its full sequence is UPF0276 protein CC_3255 (280 aa).

The protein belongs to the UPF0276 family.

This Caulobacter vibrioides (strain ATCC 19089 / CIP 103742 / CB 15) (Caulobacter crescentus) protein is UPF0276 protein CC_3255.